Here is a 1482-residue protein sequence, read N- to C-terminus: MKPSAECCSPKFWLVLAVLAVSGSKARSQKSAPSIGIAVILVGTSDEVAIKDAHEKDDFHHLSVVPRVELVAMNETDPKSIITRICDLMSDRKIQGVVLADDTDQEAIAQILDFISAQTLTPILGIHGGSSMIMADKDESSMFFQFGPSIEQQASVMLNIMEEYDWYIFSIVTTYFPGYQDFVNKIRSTIENSFVGWELEEVLLLDMSLDDGDSKIQNQLKKLQSPIILLYCTKEEATYIFEVANSVGLTGYGYTWIVPSLVAGDTDTVPSEFPTGLISVSYDEWDYGLPARVRDGIAIITTAASDMLSEHSFIPEPKSSCYNTHEKRIYQSNMLNRYLINVTFEGRNLSFSEDGYQMHPKLVIILLNKERKWERVGKWKDKSLQMKYYVWPRMCPETEEQEDDHLSIVTLEEAPFVIVESVDPLSGTCMRNTVPCQKRIISENKTDEEPGYIKKCCKGFCIDILKKISKSVKFTYDLYLVTNGKHGKKINGTWNGMIGEVVMKRAYMAVGSLTINEERSEVVDFSVPFIETGISVMVSRSNGTVSPSAFLEPFSADVWVMMFVMLLIVSAVAVFVFEYFSPVGYNRCLADGREPGGPSFTIGKAIWLLWGLVFNNSVPVQNPKGTTSKIMVSVWAFFAVIFLASYTANLAAFMIQEEYVDQVSGLSDKKFQRPNDFSPPFRFGTVPNGSTERNIRNNYAEMHAYMGKFNQRGVDDALLSLKTGKLDAFIYDAAVLNYMAGRDEGCKLVTIGSGKVFASTGYGIAIQKDSGWKRQVDLAILQLFGDGEMEELEALWLTGICHNEKNEVMSSQLDIDNMAGVFYMLGAAMALSLITFICEHLFYWQFRHCFMGVCSGKPGMVFSISRGIYSCIHGVAIEERQSVMNSPTATMNNTHSNILRLLRTAKNMANLSGVNGSPQSALDFIRRESSVYDISEHRRSFTHSDCKSYNNPPCEENLFSDYISEVERTFGNLQLKDSNVYQDHYHHHHRPHSIGSTSSIDGLYDCDNPPFTTQPRSISKKPLDIGLPSSKHSQLSDLYGKFSFKSDRYSGHDDLIRSDVSDISTHTVTYGNIEGNAAKRRKQQYKDSLKKRPASAKSRREFDEIELAYRRRPPRSPDHKRYFRDKEGLRDFYLDQFRTKENSPHWEHVDLTDIYKERSDDFKRDSVSGGGPCTNRSHLKHGTGDKHGVVGGVPAPWEKNLTNVDWEDRSGGNFCRSCPSKLHNYSSTVAGQNSGRQACIRCEACKKAGNLYDISEDNSLQELDQPAAPVAVSSNASTTKYPQSPTNSKAQKKNRNKLRRQHSYDTFVDLQKEEAALAPRSVSLKDKGRFMDGSPYAHMFEMPAGESSFANKSSVTTAGHHHNNPGSGYMLSKSLYPDRVTQNPFIPTFGDDQCLLHGSKSYFFRQPTVAGASKTRPDFRALVTNKPVVSALHGAVPGRFQKDICIGNQSNPCVPNNKNPRAFNGSSNGHVYEKLSSIESDV.

Residues 1–26 form the signal peptide; the sequence is MKPSAECCSPKFWLVLAVLAVSGSKA. Over 27-557 the chain is Extracellular; that stretch reads RSQKSAPSIG…SAFLEPFSAD (531 aa). Residue Asn-74 is glycosylated (N-linked (GlcNAc...) asparagine). A disulfide bridge links Cys-86 with Cys-321. The Zn(2+) site is built by His-127 and Glu-284. N-linked (GlcNAc...) asparagine glycosylation is found at Asn-341, Asn-348, Asn-444, and Asn-491. Disulfide bonds link Cys-429–Cys-456 and Cys-436–Cys-457. Residues Thr-514 and Arg-519 each coordinate L-glutamate. Residue Asn-542 is glycosylated (N-linked (GlcNAc...) asparagine). The helical transmembrane segment at 558-576 threads the bilayer; the sequence is VWVMMFVMLLIVSAVAVFV. The Cytoplasmic portion of the chain corresponds to 577-603; that stretch reads FEYFSPVGYNRCLADGREPGGPSFTIG. An intramembrane region (discontinuously helical) is located at residues 604 to 623; the sequence is KAIWLLWGLVFNNSVPVQNP. The segment at 604 to 623 is pore-forming; that stretch reads KAIWLLWGLVFNNSVPVQNP. Residues 624–630 lie on the Cytoplasmic side of the membrane; it reads KGTTSKI. A helical transmembrane segment spans residues 631–646; the sequence is MVSVWAFFAVIFLASY. Topologically, residues 647–817 are extracellular; sequence TANLAAFMIQ…VMSSQLDIDN (171 aa). Asn-688 carries N-linked (GlcNAc...) asparagine glycosylation. Residues 690–691 and Asp-732 each bind L-glutamate; that span reads ST. Cys-746 and Cys-801 are joined by a disulfide. A helical transmembrane segment spans residues 818–837; it reads MAGVFYMLGAAMALSLITFI. The Cytoplasmic segment spans residues 838 to 1482; sequence CEHLFYWQFR…EKLSSIESDV (645 aa). Ser-882, Ser-886, Ser-917, and Ser-920 each carry phosphoserine. Phosphotyrosine occurs at positions 962 and 1039. Residues Ser-1058, Ser-1061, and Ser-1064 each carry the phosphoserine modification. Residues 1074–1097 form a disordered region; the sequence is EGNAAKRRKQQYKDSLKKRPASAK. Phosphotyrosine occurs at positions 1109 and 1133. Residue Ser-1143 is modified to Phosphoserine. At Tyr-1155 the chain carries Phosphotyrosine. The tract at residues 1162 to 1194 is disordered; sequence FKRDSVSGGGPCTNRSHLKHGTGDKHGVVGGVP. Residues Ser-1255 and Ser-1259 each carry the phosphoserine modification. A compositionally biased stretch (low complexity) spans 1266-1277; the sequence is PAAPVAVSSNAS. Residues 1266–1301 are disordered; the sequence is PAAPVAVSSNASTTKYPQSPTNSKAQKKNRNKLRRQ. Residues 1278-1289 are compositionally biased toward polar residues; that stretch reads TTKYPQSPTNSK. Residues 1290 to 1301 are compositionally biased toward basic residues; sequence AQKKNRNKLRRQ. The segment at 1292 to 1304 is interaction with DAPK1; sequence KKNRNKLRRQHSY. Ser-1303 bears the Phosphoserine; by DAPK1 mark. A Phosphotyrosine modification is found at Tyr-1472. The PDZ-binding motif lies at 1480–1482; the sequence is SDV.

The protein belongs to the glutamate-gated ion channel (TC 1.A.10.1) family. NR2B/GRIN2B subfamily. In terms of assembly, heterotetramer. Forms heterotetrameric channels composed of two GluN1/zeta subunits (GRIN1), and two identical GluN2/epsilon subunits (GRIN2A, GRIN2B, GRIN2C or GRIN2D) or GluN3 subunits (GRIN3A or GRIN3B) (in vitro). Can also form heterotetrameric channels that contain at least two GluN1 subunits and at least two different GluN2 subunits (or a combination of one GluN2 and one GluN3 subunits) (in vitro). In vivo, the subunit composition may depend on the expression levels of the different subunits. Found in a complex with GRIN1, GRIN3A and PPP2CB. Interacts with MAGI3. Interacts with HIP1 and NETO1. Interacts with PDZ domains of PATJ, DLG3 and DLG4. Interacts with DAPK1. Found in a complex with GRIN1 and PRR7. Interacts with PRR7. Interacts with CAMK2A. Interacts with ARC; preventing ARC oligomerization. Interacts with TMEM25. Interacts (via the extreme C-terminus) with FRMPD2 (via the second PDZ domain); the interaction is direct and is likely to promote NMDAR-mediated neural signal transmission. GRIN2A binds FRMPD2 with lower affinity than GRIN2B. Interacts with FAM81A; the interaction facilitates condensate formation via liquid-liquid phase separation. In terms of processing, phosphorylated on tyrosine residues. Phosphorylation at Ser-1303 by DAPK1 enhances synaptic NMDA receptor channel activity. In terms of tissue distribution, detected in brain (at protein level). Detected throughout the brain, and in brain stem trigeminal nucleus. Detected in forebrain.

It localises to the cell membrane. The protein resides in the postsynaptic cell membrane. It is found in the cell projection. Its subcellular location is the dendrite. The protein localises to the late endosome. It localises to the lysosome. The protein resides in the cytoplasm. It is found in the cytoskeleton. It catalyses the reaction Ca(2+)(in) = Ca(2+)(out). It carries out the reaction Na(+)(in) = Na(+)(out). The enzyme catalyses K(+)(in) = K(+)(out). Its function is as follows. Component of N-methyl-D-aspartate (NMDA) receptors (NMDARs) that function as heterotetrameric, ligand-gated cation channels with high calcium permeability and voltage-dependent block by Mg(2+). Participates in synaptic plasticity for learning and memory formation by contributing to the long-term depression (LTD) of hippocampus membrane currents. Channel activation requires binding of the neurotransmitter L-glutamate to the GluN2 subunit, glycine or D-serine binding to the GluN1 subunit, plus membrane depolarization to eliminate channel inhibition by Mg(2+). NMDARs mediate simultaneously the potasium efflux and the influx of calcium and sodium. Each GluN2 subunit confers differential attributes to channel properties, including activation, deactivation and desensitization kinetics, pH sensitivity, Ca2(+) permeability, and binding to allosteric modulators. In concert with DAPK1 at extrasynaptic sites, acts as a central mediator for stroke damage. Its phosphorylation at Ser-1303 by DAPK1 enhances synaptic NMDA receptor channel activity inducing injurious Ca2+ influx through them, resulting in an irreversible neuronal death. The polypeptide is Glutamate receptor ionotropic, NMDA 2B (Mus musculus (Mouse)).